Reading from the N-terminus, the 87-residue chain is U15-lycotoxin-Ls1h (87 aa).

Residues Met-1–Ser-20 form the signal peptide. The region spanning Asp-21–Thr-66 is the WAP domain. Cystine bridges form between Cys-24/Cys-54, Cys-32/Cys-58, Cys-41/Cys-53, Cys-42/Cys-80, and Cys-47/Cys-62.

This sequence belongs to the venom protein 11 family. 01 (wap-1) subfamily. Post-translationally, contains 5 disulfide bonds. As to expression, expressed by the venom gland.

Its subcellular location is the secreted. In terms of biological role, has antibacterial activity. In Lycosa singoriensis (Wolf spider), this protein is U15-lycotoxin-Ls1h.